The primary structure comprises 422 residues: Carboxypeptidase B2 (422 aa).

Residues 1 to 21 (MKLHGLGILVAIILYEQHGFA) form the signal peptide. A propeptide spans 22–113 (FQSGQVLSAL…QTFNDTVSPR (92 aa)) (activation peptide). Residues asparagine 43, asparagine 72, asparagine 84, and asparagine 107 are each glycosylated (N-linked (GlcNAc...) asparagine). A Peptidase M14 domain is found at 121–418 (QYHSLNEIYS…AAISKIVWHV (298 aa)). A disulfide bond links cysteine 177 and cysteine 190. 2 residues coordinate Zn(2+): histidine 180 and glutamate 183. Substrate contacts are provided by residues 180–183 (HARE) and arginine 238. Asparagine 240 carries N-linked (GlcNAc...) asparagine glycosylation. 2 disulfides stabilise this stretch: cysteine 249–cysteine 273 and cysteine 264–cysteine 278. 255-256 (NR) is a substrate binding site. Residue histidine 309 participates in Zn(2+) binding. Residue 310-311 (SY) participates in substrate binding. The N-linked (GlcNAc...) asparagine glycan is linked to asparagine 322. Residue tyrosine 362 participates in substrate binding. Residue glutamate 384 is the Proton donor/acceptor of the active site.

Belongs to the peptidase M14 family. Zn(2+) is required as a cofactor. Plasma; synthesized in the liver.

It is found in the secreted. It carries out the reaction Release of C-terminal Arg and Lys from a polypeptide.. TAFI/CPB2 is unique among carboxypeptidases in that it spontaneously inactivates with a short half-life, a property that is crucial for its role in controlling blood clot lysis. The zymogen is stabilized by interactions with the activation peptide. Release of the activation peptide increases a dynamic flap mobility and in time this leads to conformational changes that disrupt the catalytic site and expose a cryptic thrombin-cleavage site present at Arg-323. Functionally, cleaves C-terminal arginine or lysine residues from biologically active peptides such as kinins or anaphylatoxins in the circulation thereby regulating their activities. Down-regulates fibrinolysis by removing C-terminal lysine residues from fibrin that has already been partially degraded by plasmin. The polypeptide is Carboxypeptidase B2 (Cpb2) (Mus musculus (Mouse)).